The chain runs to 147 residues: Large ribosomal subunit protein uL15 (147 aa).

Residues 1–46 (MSIRLENLSYTPGARKEKHRKGRGHAAGKGKQAGRGQSGQKKRSTV) form a disordered region. Residues 16 to 28 (KEKHRKGRGHAAG) are compositionally biased toward basic residues.

The protein belongs to the universal ribosomal protein uL15 family. As to quaternary structure, part of the 50S ribosomal subunit.

In terms of biological role, binds to the 23S rRNA. This chain is Large ribosomal subunit protein uL15, found in Mesomycoplasma hyopneumoniae (strain J / ATCC 25934 / NCTC 10110) (Mycoplasma hyopneumoniae).